The sequence spans 245 residues: uncharacterized protein (245 aa).

This is an uncharacterized protein from Rhodobacter capsulatus (Rhodopseudomonas capsulata).